The sequence spans 437 residues: Putative O-antigen export protein (437 aa).

Transmembrane regions (helical) follow at residues 3 to 23, 41 to 61, 81 to 101, 129 to 149, 152 to 172, 185 to 205, 231 to 251, 269 to 289, 310 to 330, 332 to 352, 375 to 395, and 398 to 418; these read VPTH…SIFI, AVFT…FGLG, LVLS…ILIL, VASF…IWFS, KGWV…VFLM, IIFS…ISTL, GGFF…YIVM, TFGL…PVCA, FGFI…DFIV, ILAP…FSFY, LWIS…VGAV, and GLVG…SWWL.

The protein resides in the cell inner membrane. Its pathway is bacterial outer membrane biogenesis; LPS O-antigen biosynthesis. Functionally, may be involved in the translocation process of the nascent O-polysaccharide molecules and/or its ligation to lipid A core units. This is Putative O-antigen export protein (rfbX) from Yersinia pseudotuberculosis.